The primary structure comprises 331 residues: Spondin-2 (331 aa).

The N-terminal stretch at Met-1–Gly-26 is a signal peptide. Positions Gly-31–Pro-221 constitute a Spondin domain. A disulfide bond links Cys-35 and Cys-171. Glu-141 contributes to the a divalent metal cation binding site. The Ca(2+) site is built by Asp-160, Asp-188, and Asp-192. A TSP type-1 domain is found at Asp-277–Val-331. A glycan (C-linked (Man) tryptophan) is linked at Trp-283.

Monomer. Interacts with integrin. As to expression, expressed in normal lung tissue but not in lung carcinoma cell lines.

It localises to the secreted. The protein localises to the extracellular space. Its subcellular location is the extracellular matrix. Functionally, cell adhesion protein that promotes adhesion and outgrowth of hippocampal embryonic neurons. Binds directly to bacteria and their components and functions as an opsonin for macrophage phagocytosis of bacteria. Essential in the initiation of the innate immune response and represents a unique pattern-recognition molecule in the ECM for microbial pathogens. Binds bacterial lipopolysaccharide (LPS). This chain is Spondin-2 (SPON2), found in Homo sapiens (Human).